A 242-amino-acid polypeptide reads, in one-letter code: Probable transcriptional regulatory protein STH1004 (242 aa).

It belongs to the TACO1 family.

It is found in the cytoplasm. The chain is Probable transcriptional regulatory protein STH1004 from Symbiobacterium thermophilum (strain DSM 24528 / JCM 14929 / IAM 14863 / T).